The chain runs to 276 residues: NAD kinase (276 aa).

The Proton acceptor role is filled by aspartate 61. NAD(+)-binding positions include aspartate 61–glycine 62, asparagine 134–aspartate 135, arginine 145, lysine 162, aspartate 164, valine 172, threonine 175–serine 180, and glutamine 234.

It belongs to the NAD kinase family. A divalent metal cation is required as a cofactor.

It localises to the cytoplasm. The catalysed reaction is NAD(+) + ATP = ADP + NADP(+) + H(+). Functionally, involved in the regulation of the intracellular balance of NAD and NADP, and is a key enzyme in the biosynthesis of NADP. Catalyzes specifically the phosphorylation on 2'-hydroxyl of the adenosine moiety of NAD to yield NADP. The polypeptide is NAD kinase (Clostridium perfringens (strain ATCC 13124 / DSM 756 / JCM 1290 / NCIMB 6125 / NCTC 8237 / Type A)).